Consider the following 548-residue polypeptide: Membrane protein insertase YidC (548 aa).

A helical transmembrane segment spans residues 6–26; it reads NLLVIALLFVSFMIWQAWEQD. The segment at 28-54 is disordered; the sequence is NPQPQTQQTTQTTTTAAGSAADQGVPA. The segment covering 29-42 has biased composition (low complexity); the sequence is PQPQTQQTTQTTTT. A run of 4 helical transmembrane segments spans residues 350 to 370, 424 to 444, 458 to 478, and 499 to 519; these read FVGN…GIMY, FPLI…MGSI, LSAQ…MFFI, and PVIF…YYIV.

This sequence belongs to the OXA1/ALB3/YidC family. Type 1 subfamily. Interacts with the Sec translocase complex via SecD. Specifically interacts with transmembrane segments of nascent integral membrane proteins during membrane integration.

The protein resides in the cell inner membrane. Required for the insertion and/or proper folding and/or complex formation of integral membrane proteins into the membrane. Involved in integration of membrane proteins that insert both dependently and independently of the Sec translocase complex, as well as at least some lipoproteins. Aids folding of multispanning membrane proteins. This Salmonella arizonae (strain ATCC BAA-731 / CDC346-86 / RSK2980) protein is Membrane protein insertase YidC.